The primary structure comprises 398 residues: 1-deoxy-D-xylulose 5-phosphate reductoisomerase (398 aa).

Residues Thr10, Gly11, Ser12, Ile13, Gly36, Arg37, Asn38, and Asn124 each contribute to the NADPH site. 1-deoxy-D-xylulose 5-phosphate is bound at residue Lys125. NADPH is bound at residue Glu126. Asp150 contributes to the Mn(2+) binding site. Residues Ser151, Glu152, Ser186, and His209 each coordinate 1-deoxy-D-xylulose 5-phosphate. Glu152 is a Mn(2+) binding site. Gly215 is a binding site for NADPH. The 1-deoxy-D-xylulose 5-phosphate site is built by Ser222, Asn227, Lys228, and Glu231. A Mn(2+)-binding site is contributed by Glu231.

The protein belongs to the DXR family. Homodimer. The cofactor is Mg(2+). Mn(2+) is required as a cofactor.

The enzyme catalyses 2-C-methyl-D-erythritol 4-phosphate + NADP(+) = 1-deoxy-D-xylulose 5-phosphate + NADPH + H(+). The protein operates within isoprenoid biosynthesis; isopentenyl diphosphate biosynthesis via DXP pathway; isopentenyl diphosphate from 1-deoxy-D-xylulose 5-phosphate: step 1/6. Functionally, catalyzes the NADPH-dependent rearrangement and reduction of 1-deoxy-D-xylulose-5-phosphate (DXP) to 2-C-methyl-D-erythritol 4-phosphate (MEP). The polypeptide is 1-deoxy-D-xylulose 5-phosphate reductoisomerase (Yersinia pseudotuberculosis serotype O:1b (strain IP 31758)).